The following is a 384-amino-acid chain: uncharacterized protein (384 aa).

The next 10 membrane-spanning stretches (helical) occupy residues L11–I31, W33–M53, L66–L86, F94–L114, L153–I173, L197–A217, A224–V244, I284–V304, L309–M329, and F342–Y362.

The protein belongs to the AbrB family.

It is found in the cell membrane. This is an uncharacterized protein from Bacillus subtilis (strain 168).